A 296-amino-acid polypeptide reads, in one-letter code: Co-chaperone protein DjlA (296 aa).

The Periplasmic segment spans residues 1–15 (MNLRDFFVITTWWGK). The chain crosses the membrane as a helical span at residues 16–39 (ILGAFFGYLTAGPVGALFGILVGN). At 40-296 (FFDRGLVSYY…YELICETKGW (257 aa)) the chain is on the cytoplasmic side. The tract at residues 200 to 225 (QHYHNQQEYKHTSSSQGQQGYKPQSP) is disordered. A compositionally biased stretch (polar residues) spans 211-221 (TSSSQGQQGYK). The 66-residue stretch at 231–296 (HAFALLEVSP…YELICETKGW (66 aa)) folds into the J domain.

In terms of assembly, homodimer.

It is found in the cell inner membrane. Functionally, regulatory DnaK co-chaperone. Direct interaction between DnaK and DjlA is needed for the induction of the wcaABCDE operon, involved in the synthesis of a colanic acid polysaccharide capsule, possibly through activation of the RcsB/RcsC phosphotransfer signaling pathway. The colanic acid capsule may help the bacterium survive conditions outside the host. The sequence is that of Co-chaperone protein DjlA from Legionella pneumophila subsp. pneumophila (strain Philadelphia 1 / ATCC 33152 / DSM 7513).